The following is a 192-amino-acid chain: Adenylate kinase (192 aa).

10 to 18 (GVPGVGSTT) serves as a coordination point for ATP.

This sequence belongs to the archaeal adenylate kinase family. Monomer.

It localises to the cytoplasm. It catalyses the reaction AMP + ATP = 2 ADP. In Methanocaldococcus jannaschii (strain ATCC 43067 / DSM 2661 / JAL-1 / JCM 10045 / NBRC 100440) (Methanococcus jannaschii), this protein is Adenylate kinase (adkA).